Reading from the N-terminus, the 522-residue chain is Cytochrome P450 monooxygenase AKT7 (522 aa).

The chain crosses the membrane as a helical span at residues 10–30; the sequence is LYVTCTVLAALILGYIQAMII. Cys-452 contacts heme.

Belongs to the cytochrome P450 family. The cofactor is heme.

Its subcellular location is the membrane. It functions in the pathway mycotoxin biosynthesis. Functionally, cytochrome P450 monooxygenase; part of the gene clusters that mediate the biosynthesis of the host-selective toxins (HSTs) AK-toxins responsible for Japanese pear black spot disease by the Japanese pear pathotype. AK-toxins are esters of 9,10-epoxy 8-hydroxy 9-methyldecatrienoic acid (EDA). On cellular level, AK-toxins affect plasma membrane of susceptible cells and cause a sudden increase in loss of K(+) after a few minutes of toxin treatment. The acyl-CoA ligase AKT1, the hydrolase AKT2 and enoyl-CoA hydratase AKT3 are all involved in the biosynthesis of the AK-, AF- and ACT-toxin common 9,10-epoxy-8-hydroxy-9-methyl-decatrienoic acid (EDA) structural moiety. Part of the EDA biosynthesis occurs in the peroxisome since these 3 enzymes are localized in peroxisomes. The exact roles of the 3 enzymes, as well as of additional AK-toxin clusters enzymes, including AKT4, AKT6 and AKTS1, have still to be elucidated. The Cytochrome P450 monooxygenase AKT7 on the other side functions to limit production of EDA and AK-toxin, probably via the catalysis of a side reaction of EDA or its precursor. This Alternaria alternata (Alternaria rot fungus) protein is Cytochrome P450 monooxygenase AKT7.